The following is a 145-amino-acid chain: Transcriptional regulator MraZ (145 aa).

2 consecutive SpoVT-AbrB domains span residues 7–54 (NATN…GPDL) and 83–126 (GVFM…QPQA).

The protein belongs to the MraZ family. As to quaternary structure, forms oligomers.

The protein localises to the cytoplasm. It localises to the nucleoid. The chain is Transcriptional regulator MraZ from Rhizobium johnstonii (strain DSM 114642 / LMG 32736 / 3841) (Rhizobium leguminosarum bv. viciae).